Consider the following 192-residue polypeptide: Transmembrane protein 11, mitochondrial (192 aa).

The tract at residues 1-20 (MAAWGRRRLGPGSSGGSARE) is disordered. The next 2 helical transmembrane spans lie at 84–100 (TAVL…LALP) and 107–124 (ISLP…LYGI).

The protein belongs to the TMEM11 family. Associates with the mitochondrial contact site and cristae organizing system (MICOS) complex, composed of at least MICOS10/MIC10, CHCHD3/MIC19, CHCHD6/MIC25, APOOL/MIC27, IMMT/MIC60, APOO/MIC23/MIC26 and QIL1/MIC13. This complex was also known under the names MINOS or MitOS complex. The MICOS complex associates with mitochondrial outer membrane proteins SAMM50, MTX1, MTX2 and DNAJC11, mitochondrial inner membrane protein TMEM11 and with HSPA9. Interacts with IMMT/MIC60.

Its subcellular location is the mitochondrion inner membrane. Plays a role in mitochondrial morphogenesis. The polypeptide is Transmembrane protein 11, mitochondrial (TMEM11) (Homo sapiens (Human)).